The primary structure comprises 510 residues: 2,3-bisphosphoglycerate-independent phosphoglycerate mutase (510 aa).

Mn(2+)-binding residues include D13 and S63. S63 serves as the catalytic Phosphoserine intermediate. Substrate is bound by residues H124, 154–155, R186, R192, 262–265, and K334; these read RD and RADR. Mn(2+) contacts are provided by D401, H405, D442, H443, and H461.

Belongs to the BPG-independent phosphoglycerate mutase family. As to quaternary structure, monomer. Mn(2+) is required as a cofactor.

It catalyses the reaction (2R)-2-phosphoglycerate = (2R)-3-phosphoglycerate. It participates in carbohydrate degradation; glycolysis; pyruvate from D-glyceraldehyde 3-phosphate: step 3/5. In terms of biological role, catalyzes the interconversion of 2-phosphoglycerate and 3-phosphoglycerate. The sequence is that of 2,3-bisphosphoglycerate-independent phosphoglycerate mutase from Vibrio vulnificus (strain YJ016).